Here is a 336-residue protein sequence, read N- to C-terminus: N-acetylornithine carbamoyltransferase (336 aa).

Carbamoyl phosphate is bound by residues 49-52, tryptophan 77, and arginine 112; that span reads SMRT. Glutamate 144 serves as a coordination point for N(2)-acetyl-L-ornithine. Residue 148–151 participates in carbamoyl phosphate binding; that stretch reads HPCQ. Positions 252 and 295 each coordinate N(2)-acetyl-L-ornithine. A carbamoyl phosphate-binding site is contributed by 294-295; sequence CL. Residue lysine 302 is modified to N6-carboxylysine. Arginine 322 lines the carbamoyl phosphate pocket.

This sequence belongs to the aspartate/ornithine carbamoyltransferase superfamily. AOTCase family. Homotrimer.

It is found in the cytoplasm. It catalyses the reaction N(2)-acetyl-L-ornithine + carbamoyl phosphate = N(2)-acetyl-L-citrulline + phosphate + H(+). It functions in the pathway amino-acid biosynthesis; L-arginine biosynthesis. With respect to regulation, carboxylation at Lys-302 increases the catalytic activity of the enzyme. Functionally, catalyzes the transfer of the carbamoyl group from carbamoyl phosphate to the delta-amino group of N(2)-acetyl-L-ornithine to produce N(2)-acetyl-L-citrulline. This is a step in an alternative arginine biosynthesis pathway. The enzyme has no activity with ornithine. This is N-acetylornithine carbamoyltransferase from Xylella fastidiosa (strain Temecula1 / ATCC 700964).